A 94-amino-acid chain; its full sequence is MLKPLGDRVLLKIEEKEQTVGGFVLAGSAQEKTKTAQVVATGQGVRTLNGDLVAPSVKTGDRVLVEAHAGLDVKDGDEKYIIVGEANILAIIEE.

The protein belongs to the GroES chaperonin family. As to quaternary structure, heptamer of 7 subunits arranged in a ring. Interacts with the chaperonin GroEL.

The protein localises to the cytoplasm. In terms of biological role, together with the chaperonin GroEL, plays an essential role in assisting protein folding. The GroEL-GroES system forms a nano-cage that allows encapsulation of the non-native substrate proteins and provides a physical environment optimized to promote and accelerate protein folding. GroES binds to the apical surface of the GroEL ring, thereby capping the opening of the GroEL channel. The chain is Co-chaperonin GroES from Streptococcus pneumoniae (strain ATCC BAA-255 / R6).